The following is a 79-amino-acid chain: uncharacterized protein (79 aa).

A run of 2 helical transmembrane segments spans residues 18–38 (IWIINLKVIIKIIISEIIVLI) and 50–70 (GITFVKNEFIISSIFYFFFLF).

The protein localises to the host membrane. This is an uncharacterized protein from Spiroplasma virus SpV1-R8A2 B (SpV1).